A 179-amino-acid chain; its full sequence is Large ribosomal subunit protein uL6 (179 aa).

Belongs to the universal ribosomal protein uL6 family. Part of the 50S ribosomal subunit.

Its function is as follows. This protein binds to the 23S rRNA, and is important in its secondary structure. It is located near the subunit interface in the base of the L7/L12 stalk, and near the tRNA binding site of the peptidyltransferase center. This Chloroherpeton thalassium (strain ATCC 35110 / GB-78) protein is Large ribosomal subunit protein uL6.